We begin with the raw amino-acid sequence, 153 residues long: Putative transcription factor YdeB (153 aa).

This sequence belongs to the CarD family.

The polypeptide is Putative transcription factor YdeB (ydeB) (Bacillus subtilis (strain 168)).